The following is a 198-amino-acid chain: Fe/S biogenesis protein NfuA (198 aa).

[4Fe-4S] cluster-binding residues include C155 and C158.

The protein belongs to the NfuA family. In terms of assembly, homodimer. It depends on [4Fe-4S] cluster as a cofactor.

In terms of biological role, involved in iron-sulfur cluster biogenesis. Binds a 4Fe-4S cluster, can transfer this cluster to apoproteins, and thereby intervenes in the maturation of Fe/S proteins. Could also act as a scaffold/chaperone for damaged Fe/S proteins. The chain is Fe/S biogenesis protein NfuA from Haemophilus influenzae (strain 86-028NP).